A 163-amino-acid polypeptide reads, in one-letter code: Single-stranded DNA-binding protein 1 (163 aa).

Residues 1-104 (MINNVVLVGR…VVAESFQLLE (104 aa)) enclose the SSB domain. The segment at 106–163 (RATREGGSPNSYNNGGYNNAPSNNSYSASSQQTPNFSRDESPFGNSNPMDISDDDLPF) is disordered. Over residues 111-135 (GGSPNSYNNGGYNNAPSNNSYSASS) the composition is skewed to low complexity. The Important for interaction with partner proteins signature appears at 158–163 (DDDLPF).

In terms of assembly, homotetramer.

Functionally, plays an important role in DNA replication, recombination and repair. Binds to ssDNA and to an array of partner proteins to recruit them to their sites of action during DNA metabolism. This is Single-stranded DNA-binding protein 1 (ssb1) from Streptococcus agalactiae serotype III (strain NEM316).